We begin with the raw amino-acid sequence, 69 residues long: Probable rubredoxin HupI (69 aa).

In terms of domain architecture, Rubredoxin-like spans 16 to 67 (VTRLECGICWTVYDPADGDDVAQIAPGTPFAALPEEWHCPNCDAPKSKFMAI). Fe cation is bound by residues Cys21, Cys24, Cys54, and Cys57.

Belongs to the rubredoxin family. Fe(3+) is required as a cofactor.

Its function is as follows. Could be an electron transport intermediate in hydrogen oxidation. This Bradyrhizobium diazoefficiens (strain JCM 10833 / BCRC 13528 / IAM 13628 / NBRC 14792 / USDA 110) protein is Probable rubredoxin HupI (hupI).